The following is a 578-amino-acid chain: Proline--tRNA ligase (578 aa).

This sequence belongs to the class-II aminoacyl-tRNA synthetase family. ProS type 1 subfamily. Homodimer.

It is found in the cytoplasm. It carries out the reaction tRNA(Pro) + L-proline + ATP = L-prolyl-tRNA(Pro) + AMP + diphosphate. Its function is as follows. Catalyzes the attachment of proline to tRNA(Pro) in a two-step reaction: proline is first activated by ATP to form Pro-AMP and then transferred to the acceptor end of tRNA(Pro). As ProRS can inadvertently accommodate and process non-cognate amino acids such as alanine and cysteine, to avoid such errors it has two additional distinct editing activities against alanine. One activity is designated as 'pretransfer' editing and involves the tRNA(Pro)-independent hydrolysis of activated Ala-AMP. The other activity is designated 'posttransfer' editing and involves deacylation of mischarged Ala-tRNA(Pro). The misacylated Cys-tRNA(Pro) is not edited by ProRS. The sequence is that of Proline--tRNA ligase from Burkholderia thailandensis (strain ATCC 700388 / DSM 13276 / CCUG 48851 / CIP 106301 / E264).